Consider the following 514-residue polypeptide: Triacylglyceride transporter MAB_2807 (514 aa).

11 helical membrane-spanning segments follow: residues 19-39 (IAIG…YVVV), 58-78 (QVTP…PLLG), 88-108 (LILQ…ALST), 118-138 (VIQG…GADL), 157-177 (LGSV…GSWT), 178-198 (AIFW…QFSV), 210-230 (VDVV…VGLY), 239-259 (LPEW…AFIL), 278-298 (PFFA…VTLV), 316-336 (VFLL…GGWL), and 344-364 (IIAV…SGWP). A beta-hairpin region spans residues 371-380 (VHNFGFFTLP). A run of 3 helical transmembrane segments spans residues 385-405 (DLVV…SAAL), 420-440 (VVVA…GWGI), and 485-505 (MFAI…FVGS).

The protein belongs to the major facilitator superfamily. P55 (TC 2.A.1.3.34) family.

Its subcellular location is the cell inner membrane. In terms of biological role, in association with lipoprotein LprG probably transports triacyglycerides (TAG) across the inner cell membrane into the periplasm; TAG probably regulates lipid metabolism and growth regulation and plays a structural role in the outer membrane. TAG (and maybe other lipids) enters the central cavity of the P55 transporter from within the cell inner membrane via clefts on the cytoplasmic face of P55 between TM5-TM8 and TM2-TM11. From there the lipid is probably transferred to the hydrophobic cavity of LprG. Involved in drug susceptibilty, its expression partially complements the antibiotic susceptibilty of a double lprG-mfs deletion. Probably does not function as a bona fide drug efflux pump, but instead plays a role in outer membrane biogenesis. Probably required with LprG for normal surface localization of lipoarabinomannan (LAM). The protein is Triacylglyceride transporter MAB_2807 of Mycobacteroides abscessus (strain ATCC 19977 / DSM 44196 / CCUG 20993 / CIP 104536 / JCM 13569 / NCTC 13031 / TMC 1543 / L948) (Mycobacterium abscessus).